We begin with the raw amino-acid sequence, 156 residues long: Transcriptional repressor NrdR (156 aa).

A zinc finger spans residues 3–34 (CPFCGNVDTQVKDSRPAEDHVAIRRRRFCPAC). The ATP-cone domain maps to 49–139 (LVVIKSNGKR…VYKNFQATGD (91 aa)).

Belongs to the NrdR family. The cofactor is Zn(2+).

In terms of biological role, negatively regulates transcription of bacterial ribonucleotide reductase nrd genes and operons by binding to NrdR-boxes. This is Transcriptional repressor NrdR from Jannaschia sp. (strain CCS1).